Reading from the N-terminus, the 715-residue chain is L-type lectin-domain containing receptor kinase VIII.1 (715 aa).

A signal peptide spans 1–21 (MSLFLSFFISILLCFFNGATT). Residues 22–247 (TQFDFSTLAI…IHSIEWWSFS (226 aa)) form a legume-lectin like region. Residues 22–317 (TQFDFSTLAI…SRFCKENPGT (296 aa)) are Extracellular-facing. N-linked (GlcNAc...) asparagine glycosylation is found at Asn126 and Asn195. Residues 255-296 (GSGSGSPPPRANLMNPKANSVKSPPPLASQPSSSAIPISSNT) are disordered. Positions 283 to 296 (SQPSSSAIPISSNT) are enriched in low complexity. A helical transmembrane segment spans residues 318–338 (IAGVVTAGAFFLALFAGALFW). At 339-715 (VYSKKFKRVE…IIRSDDDHLV (377 aa)) the chain is on the cytoplasmic side. Residues 376-676 (FNESRIIGHG…MSFSTSHLLL (301 aa)) form the Protein kinase domain. ATP-binding positions include 382–390 (IGHGAFGVV) and Lys405. Asp500 (proton acceptor) is an active-site residue.

It in the C-terminal section; belongs to the protein kinase superfamily. Ser/Thr protein kinase family. In the N-terminal section; belongs to the leguminous lectin family.

It localises to the cell membrane. It carries out the reaction L-seryl-[protein] + ATP = O-phospho-L-seryl-[protein] + ADP + H(+). The catalysed reaction is L-threonyl-[protein] + ATP = O-phospho-L-threonyl-[protein] + ADP + H(+). In Arabidopsis thaliana (Mouse-ear cress), this protein is L-type lectin-domain containing receptor kinase VIII.1 (LECRK81).